Here is a 154-residue protein sequence, read N- to C-terminus: Interleukin-2 (154 aa).

An N-terminal signal peptide occupies residues 1–20 (MYRMQLLSCIALSLALITNS). An O-linked (GalNAc...) threonine glycan is attached at Thr-23. Cys-78 and Cys-126 are oxidised to a cystine.

This sequence belongs to the IL-2 family.

It is found in the secreted. Cytokine produced by activated CD4-positive helper T-cells and to a lesser extend activated CD8-positive T-cells and natural killer (NK) cells that plays pivotal roles in the immune response and tolerance. Binds to a receptor complex composed of either the high-affinity trimeric IL-2R (IL2RA/CD25, IL2RB/CD122 and IL2RG/CD132) or the low-affinity dimeric IL-2R (IL2RB and IL2RG). Interaction with the receptor leads to oligomerization and conformation changes in the IL-2R subunits resulting in downstream signaling starting with phosphorylation of JAK1 and JAK3. In turn, JAK1 and JAK3 phosphorylate the receptor to form a docking site leading to the phosphorylation of several substrates including STAT5. This process leads to activation of several pathways including STAT, phosphoinositide-3-kinase/PI3K and mitogen-activated protein kinase/MAPK pathways. Functions as a T-cell growth factor and can increase NK-cell cytolytic activity as well. Promotes strong proliferation of activated B-cells and subsequently immunoglobulin production. Plays a pivotal role in regulating the adaptive immune system by controlling the survival and proliferation of regulatory T-cells, which are required for the maintenance of immune tolerance. Moreover, participates in the differentiation and homeostasis of effector T-cell subsets, including Th1, Th2, Th17 as well as memory CD8-positive T-cells. This Saimiri sciureus (Common squirrel monkey) protein is Interleukin-2 (IL2).